Consider the following 190-residue polypeptide: Probable RNA-binding protein 18 (190 aa).

Residues 25 to 106 (HRLWIGNLDP…KKLVVRWAHA (82 aa)) form the RRM domain. The segment at 166 to 190 (VYSYFKPPDKKRTTPYSRTAWKSRR) is disordered.

This Bos taurus (Bovine) protein is Probable RNA-binding protein 18 (RBM18).